The following is a 962-amino-acid chain: Translation initiation factor IF-2 (962 aa).

Residues 99–365 are disordered; sequence VKAAQTQAAP…GKKGKKLKLE (267 aa). Residues 117–141 show a composition bias toward basic and acidic residues; it reads DAAKARAEAAARAEARAKAEAEAAK. Over residues 145–155 the composition is skewed to low complexity; the sequence is AKAGNKAKPAA. The segment covering 173 to 216 has biased composition (basic and acidic residues); sequence KPAEESKAEKAQADKMPSKKPAEPKEKAAKPKHERNGKGKDAKK. Positions 219–234 are enriched in low complexity; sequence KPAAPAVPQPVVSAEE. A compositionally biased stretch (basic and acidic residues) spans 235–269; it reads QAQRDEEARRAAALRAHQEALLKEKQERQARREAM. Positions 270-283 are enriched in low complexity; sequence KQQAEQQAKAAQEA. The segment covering 338 to 354 has biased composition (basic and acidic residues); sequence GGRDRNNARNGDDERVR. Positions 462 to 631 constitute a tr-type G domain; the sequence is PRPPVVTVMG…LLEAEVLELT (170 aa). Residues 471 to 478 are G1; the sequence is GHVDHGKT. 471 to 478 contacts GTP; that stretch reads GHVDHGKT. Residues 496 to 500 are G2; it reads GITQH. The segment at 517-520 is G3; the sequence is DTPG. Residues 517-521 and 571-574 each bind GTP; these read DTPGH and NKID. A G4 region spans residues 571–574; sequence NKID. Positions 607–609 are G5; the sequence is SAK.

It belongs to the TRAFAC class translation factor GTPase superfamily. Classic translation factor GTPase family. IF-2 subfamily.

It localises to the cytoplasm. In terms of biological role, one of the essential components for the initiation of protein synthesis. Protects formylmethionyl-tRNA from spontaneous hydrolysis and promotes its binding to the 30S ribosomal subunits. Also involved in the hydrolysis of GTP during the formation of the 70S ribosomal complex. This Neisseria meningitidis serogroup C (strain 053442) protein is Translation initiation factor IF-2.